The following is a 96-amino-acid chain: UPF0235 protein Helmi_20270 (96 aa).

This sequence belongs to the UPF0235 family.

The protein is UPF0235 protein Helmi_20270 of Heliobacterium modesticaldum (strain ATCC 51547 / Ice1).